The sequence spans 506 residues: Histidine--tRNA ligase, mitochondrial (506 aa).

Residues 1-33 (MPLLGLLPRRAWASLLSQLLRPPCASCTGAVRC) constitute a mitochondrion transit peptide. At Ser67 the chain carries Phosphoserine. Residues 131–133 (DLT), Arg158, Gln174, Asp178, Arg327, and 331–332 (YY) contribute to the L-histidine site. At Lys444 the chain carries N6-acetyllysine.

Belongs to the class-II aminoacyl-tRNA synthetase family. As to quaternary structure, homodimer. In terms of tissue distribution, a high level expression is seen in the heart, kidney and skeletal muscle while a lower level expression is seen in the brain and liver.

The protein resides in the mitochondrion. The catalysed reaction is tRNA(His) + L-histidine + ATP = L-histidyl-tRNA(His) + AMP + diphosphate + H(+). Mitochondrial aminoacyl-tRNA synthetase that catalyzes the ATP-dependent ligation of histidine to the 3'-end of its cognate tRNA, via the formation of an aminoacyl-adenylate intermediate (His-AMP). This Homo sapiens (Human) protein is Histidine--tRNA ligase, mitochondrial (HARS2).